Reading from the N-terminus, the 527-residue chain is Dual specificity protein kinase shkA (527 aa).

The Protein kinase domain occupies 45-304 (ITTESILGDG…GIVSELEEII (260 aa)). ATP contacts are provided by residues 51–59 (LGDGSFGTV) and Lys72. Asp167 acts as the Proton acceptor in catalysis. The SH2 domain maps to 424–513 (WFHGDISTSE…INTPCLGSRF (90 aa)).

This sequence belongs to the protein kinase superfamily. TKL Ser/Thr protein kinase family. SH2 domain-containing protein kinase subfamily.

It is found in the membrane. The catalysed reaction is L-seryl-[protein] + ATP = O-phospho-L-seryl-[protein] + ADP + H(+). It carries out the reaction L-threonyl-[protein] + ATP = O-phospho-L-threonyl-[protein] + ADP + H(+). Functionally, required for proper chemotaxis and phagocytosis; proper spatiotemporal control of F-actin levels in chemotaxing cells. Negative regulator of the PI3K (phosphatidylinositol 3 kinase) pathway. Predominantly phosphorylates serines and threonines and tyrosines at a lower level. The protein is Dual specificity protein kinase shkA (shkA) of Dictyostelium discoideum (Social amoeba).